Consider the following 219-residue polypeptide: Cytidylate kinase (219 aa).

Residue 11 to 19 (GPAGVGKTT) participates in ATP binding.

It belongs to the cytidylate kinase family. Type 1 subfamily.

The protein resides in the cytoplasm. It carries out the reaction CMP + ATP = CDP + ADP. It catalyses the reaction dCMP + ATP = dCDP + ADP. The protein is Cytidylate kinase of Oleidesulfovibrio alaskensis (strain ATCC BAA-1058 / DSM 17464 / G20) (Desulfovibrio alaskensis).